The chain runs to 125 residues: Ribonuclease P protein component (125 aa).

Belongs to the RnpA family. As to quaternary structure, consists of a catalytic RNA component (M1 or rnpB) and a protein subunit.

It catalyses the reaction Endonucleolytic cleavage of RNA, removing 5'-extranucleotides from tRNA precursor.. RNaseP catalyzes the removal of the 5'-leader sequence from pre-tRNA to produce the mature 5'-terminus. It can also cleave other RNA substrates such as 4.5S RNA. The protein component plays an auxiliary but essential role in vivo by binding to the 5'-leader sequence and broadening the substrate specificity of the ribozyme. The chain is Ribonuclease P protein component from Idiomarina loihiensis (strain ATCC BAA-735 / DSM 15497 / L2-TR).